The chain runs to 214 residues: Ribonuclease T (214 aa).

The 176-residue stretch at 20-195 (VVVDVETAGF…YDTQQTAELF (176 aa)) folds into the Exonuclease domain. Mg(2+) is bound by residues Asp-23, Glu-25, His-182, and Asp-187. The Proton donor/acceptor role is filled by His-182.

This sequence belongs to the RNase T family. As to quaternary structure, homodimer. Mg(2+) is required as a cofactor.

Its function is as follows. Trims short 3' overhangs of a variety of RNA species, leaving a one or two nucleotide 3' overhang. Responsible for the end-turnover of tRNA: specifically removes the terminal AMP residue from uncharged tRNA (tRNA-C-C-A). Also appears to be involved in tRNA biosynthesis. This chain is Ribonuclease T, found in Vibrio campbellii (strain ATCC BAA-1116).